A 398-amino-acid chain; its full sequence is Streptopain (398 aa).

The signal sequence occupies residues 1 to 27 (MNKKKLGVRLLSLLALGGFVLANPVFA). The propeptide occupies 28–145 (DQNFARNEKE…TTYAGTAEIK (118 aa)). The active-site Nucleophile is cysteine 192. Cysteine 192 bears the Cysteine methyl disulfide; in zymogen form mark. Residues serine 282 and glycine 339 each contribute to the a protein site. The Proton acceptor role is filled by histidine 340. A C-terminal active site loop region spans residues 368–390 (RLDALNPSALGTGGGAGGFNGYQ).

Belongs to the peptidase C10 family. Monomer. The mature protease is derived from the precursor sequence by cleavage, either in cis via an autocatalytic mechanism, or in trans by mature SpeB or host proteases (trypsin, plasmin or subtilisin). Maturation can involve a number of protein cleavage intermediates. Mature SpeB probably plays the most important role in protein maturation in physiological conditions. Post-translationally, methylthiolation at Cys-192 of the inactive zymogen form is probably involved in the mechanism of secretion of the proteinase into the culture fluid.

The protein localises to the secreted. It is found in the host extracellular space. Its subcellular location is the host cytoplasm. The enzyme catalyses Preferential cleavage with hydrophobic residues at P2, P1 and P1'.. Its activity is regulated as follows. Synthesized as an inactive zymogen to protect the intracellular components of the bacteria from proteolytic activity during protein production. Once secreted into the extracellular milieu, cleaved into the active protease: maturation can be mediated in cis by autocatalytic cleavage, or in trans by mature SpeB or host proteases. Protease activity is strongly inhibited by zinc and copper, which prevent its maturation into an active protease: inhibition by metal ions may be required to prevent proteolysis of streptococcal proteins. Cysteine protease that acts as a key streptococcal virulence factor by cleaving host proteins involved in immune response. Triggers inflammation by mediating cleavage of host proteins, which can both promote host pathogenesis by triggering sterile inflammation and/or restrict streptococcal infection, depending on host immune statue and infection site. Cleaves host gasdermin-A (GSDMA) in epithelial cells, promoting GSDMA activation and formation of gasdermin pores, triggering pyroptosis. Pyroptosis triggers the elimination of the infected skin cell, depriving the pathogen of its protective niche, while inducing an inflammatory response. This ultimately prevents bacterial penetration of the epithelial barrier and a subsequent systemic dissemination of the pathogen. Also mediates cleavage of the cytokine precursor interleukin-1 beta (IL1B) to its mature form, resulting in inflammation and septic shock. SpeB-mediated maturation of IL1B plays a dual role depending on infection site: while IL1B inflammatory response prevents bacterial growth during invasive skin infections, it promotes streptococcal infection of the nasopharynx by disrupting colonization resistance mediated by the microbiota. Inhibits host autophagy be catalyzing cleavage and inactivation of key autophagy factors, such as CALCOCO2, NBR1 and SQSTM1. Cleaves and inhibits a number of complement factors, such as C2, C3-beta chain of C3, C4, C5 or SERPING1, thereby promoting evasion of host immunity. May also impair adaptive immunity by catalyzing cleavage and degradation of host immunoglobulins to promote immune system evasion; the relevance of this activity is however unsure in vivo. Catalyzes maturation and release of the peptide hormone bradykinin from the precursor Kininogen-1 (KNG1) to produce hypotension during septic shock. Also involved in bacterial translocation across the host epithelial barrier by mediating cleavage and degradation of host epithelial junction proteins, such as CDH1 and OCLN. Additionally, has been involved in degradation of fibronectin and vitronectin, two host extracellular matrix proteins involved in tissue integrity. Also able to catalyze cleavage and degradation of streptococcal proteins, such as C5a peptidase, EndoS or SmeZ. Degradation of streptococcal proteins is however strictly regulated to preserve integrity of other virulence factors. The polypeptide is Streptopain (Streptococcus pyogenes serotype M1).